The primary structure comprises 65 residues: Large ribosomal subunit protein bL35 (65 aa).

A compositionally biased stretch (basic residues) spans 1–11 (MPKIKTRRSAA). The tract at residues 1-25 (MPKIKTRRSAAKRFSVTGSGKFRRR) is disordered.

This sequence belongs to the bacterial ribosomal protein bL35 family.

This chain is Large ribosomal subunit protein bL35, found in Nitratidesulfovibrio vulgaris (strain ATCC 29579 / DSM 644 / CCUG 34227 / NCIMB 8303 / VKM B-1760 / Hildenborough) (Desulfovibrio vulgaris).